A 450-amino-acid polypeptide reads, in one-letter code: UDP-N-acetylmuramoylalanine--D-glutamate ligase (450 aa).

Position 119–125 (119–125 (GSNGKTT)) interacts with ATP.

Belongs to the MurCDEF family.

Its subcellular location is the cytoplasm. It catalyses the reaction UDP-N-acetyl-alpha-D-muramoyl-L-alanine + D-glutamate + ATP = UDP-N-acetyl-alpha-D-muramoyl-L-alanyl-D-glutamate + ADP + phosphate + H(+). Its pathway is cell wall biogenesis; peptidoglycan biosynthesis. Cell wall formation. Catalyzes the addition of glutamate to the nucleotide precursor UDP-N-acetylmuramoyl-L-alanine (UMA). The polypeptide is UDP-N-acetylmuramoylalanine--D-glutamate ligase (Bacillus cereus (strain ATCC 14579 / DSM 31 / CCUG 7414 / JCM 2152 / NBRC 15305 / NCIMB 9373 / NCTC 2599 / NRRL B-3711)).